A 370-amino-acid polypeptide reads, in one-letter code: 3-isopropylmalate dehydrogenase (370 aa).

NAD(+) is bound at residue Gly-77–Glu-90. Substrate contacts are provided by Arg-97, Arg-107, Arg-135, and Asp-226. Positions 226, 250, and 254 each coordinate Mg(2+). Gly-290–Asn-302 is a binding site for NAD(+).

The protein belongs to the isocitrate and isopropylmalate dehydrogenases family. LeuB type 1 subfamily. Homodimer. It depends on Mg(2+) as a cofactor. Mn(2+) serves as cofactor.

It is found in the cytoplasm. The catalysed reaction is (2R,3S)-3-isopropylmalate + NAD(+) = 4-methyl-2-oxopentanoate + CO2 + NADH. Its pathway is amino-acid biosynthesis; L-leucine biosynthesis; L-leucine from 3-methyl-2-oxobutanoate: step 3/4. Catalyzes the oxidation of 3-carboxy-2-hydroxy-4-methylpentanoate (3-isopropylmalate) to 3-carboxy-4-methyl-2-oxopentanoate. The product decarboxylates to 4-methyl-2 oxopentanoate. This Brucella melitensis biotype 1 (strain ATCC 23456 / CCUG 17765 / NCTC 10094 / 16M) protein is 3-isopropylmalate dehydrogenase.